The sequence spans 70 residues: uncharacterized protein (70 aa).

The chain crosses the membrane as a helical span at residues Val-12–Phe-32.

The protein resides in the membrane. This is an uncharacterized protein from Saccharomyces cerevisiae (strain ATCC 204508 / S288c) (Baker's yeast).